Reading from the N-terminus, the 82-residue chain is Small ribosomal subunit protein bS16 (82 aa).

Belongs to the bacterial ribosomal protein bS16 family.

The polypeptide is Small ribosomal subunit protein bS16 (Histophilus somni (strain 2336) (Haemophilus somnus)).